Reading from the N-terminus, the 215-residue chain is Pyrrolidone-carboxylate peptidase (215 aa).

Catalysis depends on residues E81, C144, and H168.

Belongs to the peptidase C15 family. As to quaternary structure, homotetramer.

The protein resides in the cytoplasm. The enzyme catalyses Release of an N-terminal pyroglutamyl group from a polypeptide, the second amino acid generally not being Pro.. Removes 5-oxoproline from various penultimate amino acid residues except L-proline. The sequence is that of Pyrrolidone-carboxylate peptidase (pcp) from Bacillus amyloliquefaciens (Bacillus velezensis).